We begin with the raw amino-acid sequence, 115 residues long: Ribosome-binding factor A (115 aa).

Belongs to the RbfA family. In terms of assembly, monomer. Binds 30S ribosomal subunits, but not 50S ribosomal subunits or 70S ribosomes.

The protein localises to the cytoplasm. In terms of biological role, one of several proteins that assist in the late maturation steps of the functional core of the 30S ribosomal subunit. Associates with free 30S ribosomal subunits (but not with 30S subunits that are part of 70S ribosomes or polysomes). Required for efficient processing of 16S rRNA. May interact with the 5'-terminal helix region of 16S rRNA. The polypeptide is Ribosome-binding factor A (Streptococcus gordonii (strain Challis / ATCC 35105 / BCRC 15272 / CH1 / DL1 / V288)).